Reading from the N-terminus, the 474-residue chain is Aspartyl/glutamyl-tRNA(Asn/Gln) amidotransferase subunit B (474 aa).

The protein belongs to the GatB/GatE family. GatB subfamily. In terms of assembly, heterotrimer of A, B and C subunits.

It catalyses the reaction L-glutamyl-tRNA(Gln) + L-glutamine + ATP + H2O = L-glutaminyl-tRNA(Gln) + L-glutamate + ADP + phosphate + H(+). It carries out the reaction L-aspartyl-tRNA(Asn) + L-glutamine + ATP + H2O = L-asparaginyl-tRNA(Asn) + L-glutamate + ADP + phosphate + 2 H(+). In terms of biological role, allows the formation of correctly charged Asn-tRNA(Asn) or Gln-tRNA(Gln) through the transamidation of misacylated Asp-tRNA(Asn) or Glu-tRNA(Gln) in organisms which lack either or both of asparaginyl-tRNA or glutaminyl-tRNA synthetases. The reaction takes place in the presence of glutamine and ATP through an activated phospho-Asp-tRNA(Asn) or phospho-Glu-tRNA(Gln). This Wolbachia pipientis wMel protein is Aspartyl/glutamyl-tRNA(Asn/Gln) amidotransferase subunit B.